Here is a 222-residue protein sequence, read N- to C-terminus: Eukaryotic translation initiation factor 3 subunit K (222 aa).

The 163-residue stretch at Tyr-46–Lys-208 folds into the PCI domain.

Belongs to the eIF-3 subunit K family. In terms of assembly, component of the eukaryotic translation initiation factor 3 (eIF-3) complex. The eIF-3 complex interacts with pix.

The protein resides in the cytoplasm. Its function is as follows. Component of the eukaryotic translation initiation factor 3 (eIF-3) complex, which is involved in protein synthesis of a specialized repertoire of mRNAs and, together with other initiation factors, stimulates binding of mRNA and methionyl-tRNAi to the 40S ribosome. The eIF-3 complex specifically targets and initiates translation of a subset of mRNAs involved in cell proliferation. This Drosophila grimshawi (Hawaiian fruit fly) protein is Eukaryotic translation initiation factor 3 subunit K.